The chain runs to 70 residues: Large ribosomal subunit protein bL31 (70 aa).

Cys-16, Cys-18, Cys-37, and Cys-40 together coordinate Zn(2+).

This sequence belongs to the bacterial ribosomal protein bL31 family. Type A subfamily. In terms of assembly, part of the 50S ribosomal subunit. Zn(2+) serves as cofactor.

Its function is as follows. Binds the 23S rRNA. This chain is Large ribosomal subunit protein bL31, found in Shewanella sp. (strain MR-4).